A 445-amino-acid polypeptide reads, in one-letter code: Inward rectifier potassium channel 4 (445 aa).

Residues 1-55 (MHGHNRNGQAHVPRRKRRNRFVKKNGQCNVYFANLSNKSQRYMADIFTTCVDTRW) are Cytoplasmic-facing. A helical transmembrane segment spans residues 56 to 80 (RYMLMIFSAAFLVSWLFFGLLFWWI). The Extracellular portion of the chain corresponds to 81 to 119 (AFFHGDLEASPSVPAVGGPGGNGGESPNAPKPCIMHVNG). An intramembrane region (helical; Pore-forming) is located at residues 120-131 (FLGAFLFSVETQ). An intramembrane region (pore-forming) is located at residues 132 to 138 (TTIGYGF). Positions 133-138 (TIGYGF) match the Selectivity filter motif. The Extracellular segment spans residues 139 to 147 (RCVTEECPL). A helical membrane pass occupies residues 148–169 (AVIAVVVQSIVGCVIDSFMIGT). Over 170–445 (IMAKMARPKK…NISYRRESRI (276 aa)) the chain is Cytoplasmic. The PDZ-binding motif lies at 443 to 445 (SRI).

It belongs to the inward rectifier-type potassium channel (TC 1.A.2.1) family. KCNJ4 subfamily. In terms of assembly, homomultimeric and heteromultimeric association with KCNJ2 and KCNJ12. Interacts with DLG2 and DLG4. Associates, via its PDZ-recognition domain, with a complex containing LIN7A, LIN7B, LIN7C, DLG1, CASK and APBA1. Interacts with TAX1BP3. TAX1BP3 competes with LIN7 family members for KCNJ4 binding. As to expression, highly expressed in the forebrain, moderately in skeletal muscle. Im olfactory bulb, specifically expressed at the postsynaptic membrane of dendritic spines of granule cells.

It localises to the cell membrane. The protein localises to the postsynaptic cell membrane. The protein resides in the cytoplasmic vesicle membrane. It catalyses the reaction K(+)(in) = K(+)(out). Inward rectifier potassium channels are characterized by a greater tendency to allow potassium to flow into the cell rather than out of it. Their voltage dependence is regulated by the concentration of extracellular potassium; as external potassium is raised, the voltage range of the channel opening shifts to more positive voltages. The inward rectification is mainly due to the blockage of outward current by internal magnesium. Can be blocked by extracellular barium and cesium. The chain is Inward rectifier potassium channel 4 (Kcnj4) from Mus musculus (Mouse).